We begin with the raw amino-acid sequence, 155 residues long: Myelin basic protein (155 aa).

Disordered regions lie at residues 1 to 70 (MASA…GRQT) and 109 to 155 (TDGQ…PARR). Ala-2 bears the N-acetylalanine mark. Basic and acidic residues-rich tracts occupy residues 37–49 (GSRKVPEKGKEPA) and 123–134 (KSKEAYRGRRDG).

This sequence belongs to the myelin basic protein family.

The protein localises to the myelin membrane. This protein may function to maintain proper structure of myelin. This chain is Myelin basic protein (MBP), found in Heterodontus francisci (Horn shark).